The chain runs to 192 residues: Pyridoxal 5'-phosphate synthase subunit PdxT (192 aa).

46 to 48 (GES) is an L-glutamine binding site. Cysteine 76 functions as the Nucleophile in the catalytic mechanism. L-glutamine-binding positions include arginine 103 and 131–132 (IR). Residues histidine 167 and glutamate 169 each act as charge relay system in the active site.

Belongs to the glutaminase PdxT/SNO family. In the presence of PdxS, forms a dodecamer of heterodimers. Only shows activity in the heterodimer.

It catalyses the reaction aldehydo-D-ribose 5-phosphate + D-glyceraldehyde 3-phosphate + L-glutamine = pyridoxal 5'-phosphate + L-glutamate + phosphate + 3 H2O + H(+). The catalysed reaction is L-glutamine + H2O = L-glutamate + NH4(+). It participates in cofactor biosynthesis; pyridoxal 5'-phosphate biosynthesis. Its function is as follows. Catalyzes the hydrolysis of glutamine to glutamate and ammonia as part of the biosynthesis of pyridoxal 5'-phosphate. The resulting ammonia molecule is channeled to the active site of PdxS. This Koribacter versatilis (strain Ellin345) protein is Pyridoxal 5'-phosphate synthase subunit PdxT.